The following is a 276-amino-acid chain: N-alpha-acetyltransferase 60 (276 aa).

The N-acetyltransferase domain occupies 34–239 (VQLRFLVPDD…WTLLDHIKHY (206 aa)). Y59 is a binding site for substrate. Residue Y139 is part of the active site. L141 provides a ligand contact to substrate. Acetyl-CoA-binding positions include 143-145 (LGV) and 151-156 (RNGIGS). H180 is an active-site residue. Acetyl-CoA-binding positions include N185 and 192–195 (YEKR). The interval 204–215 (PYYYNIRGKGKD) is required for homodimerization. Y207 serves as a coordination point for substrate.

This sequence belongs to the acetyltransferase family. NAA60 subfamily.

It carries out the reaction N-terminal L-methionyl-[transmembrane protein] + acetyl-CoA = N-terminal N(alpha)-acetyl-L-methionyl-[transmembrane protein] + CoA + H(+). It catalyses the reaction L-lysyl-[protein] + acetyl-CoA = N(6)-acetyl-L-lysyl-[protein] + CoA + H(+). Functionally, displays alpha (N-terminal) acetyltransferase activity towards a range of N-terminal sequences including those starting with Met-Lys, Met-Val, Met-Ala and Met-Met. Required for normal chromosomal segregation during anaphase. In terms of biological role, shows histone acetyltransferase activity toward free histones. Its function is as follows. Does not show histone acetyltransferase activity toward free histones. The sequence is that of N-alpha-acetyltransferase 60 from Drosophila melanogaster (Fruit fly).